We begin with the raw amino-acid sequence, 628 residues long: Forkhead box protein O (628 aa).

Disordered regions lie at residues 39-77, 182-205, 217-269, 316-359, and 389-415; these read RARSNTWPCPRPENFVEPTDELDSTKASNQQLAPGDSQQ, KSVRRRAASMETSRYEKRRGRAKK, GLND…RLSP, QQQG…APGY, and NSVTTTMSPAYPNSEPSSDSLNTYSNV. The residue at position 44 (T44) is a Phosphothreonine; by PKB/AKT1. Positions 63–77 are enriched in polar residues; the sequence is TKASNQQLAPGDSQQ. A Phosphoserine modification is found at S75. A DNA-binding region (fork-head) is located at residues 95-201; the sequence is WGNLSYADLI…ETSRYEKRRG (107 aa). S190 is subject to Phosphoserine; by PKB/AKT1. 2 stretches are compositionally biased toward polar residues: residues 221-230 and 256-265; these read ATPSPSSSVS and RASSNASSCG. S259 is modified (phosphoserine; by PKB/AKT1). A phosphoserine mark is found at S262, S263, and S268. The span at 328 to 337 shows a compositional bias: pro residues; sequence SQPPPPPYQP. Positions 338–351 are enriched in low complexity; it reads PQHQQAQQQQSPYA. A compositionally biased stretch (polar residues) spans 402-414; sequence SEPSSDSLNTYSN.

As to quaternary structure, interacts with melt.

Its subcellular location is the cytoplasm. The protein localises to the nucleus. Functionally, transcription factor involved in the regulation of the insulin signaling pathway. Consistently activates both the downstream target Thor\d4EBP and the feedback control target InR. Involved in negative regulation of the cell cycle, modulating cell growth and proliferation. In response to cellular stresses, such as nutrient deprivation or increased levels of reactive oxygen species, foxo is activated and inhibits growth through the action of target genes such as Thor. Foxo activated in the adult fat body can regulate lifespan in adults; an insulin peptide itself may function as one secondary messenger of insulin-regulated aging. Also regulates Lip4, homolog of human acid lipases, thereby acting as a key modulator of lipid metabolism by insulin signaling and integrates insulin responses to glucose and lipid homeostasis. The sequence is that of Forkhead box protein O from Drosophila yakuba (Fruit fly).